The following is a 160-amino-acid chain: Putative 4-hydroxy-4-methyl-2-oxoglutarate aldolase (160 aa).

Substrate contacts are provided by residues 75 to 78 (GDLI) and R97. A divalent metal cation is bound at residue D98.

It belongs to the class II aldolase/RraA-like family. Homotrimer. A divalent metal cation serves as cofactor.

The enzyme catalyses 4-hydroxy-4-methyl-2-oxoglutarate = 2 pyruvate. It catalyses the reaction oxaloacetate + H(+) = pyruvate + CO2. Its function is as follows. Catalyzes the aldol cleavage of 4-hydroxy-4-methyl-2-oxoglutarate (HMG) into 2 molecules of pyruvate. Also contains a secondary oxaloacetate (OAA) decarboxylase activity due to the common pyruvate enolate transition state formed following C-C bond cleavage in the retro-aldol and decarboxylation reactions. This Rhodospirillum centenum (strain ATCC 51521 / SW) protein is Putative 4-hydroxy-4-methyl-2-oxoglutarate aldolase.